A 146-amino-acid chain; its full sequence is Large ribosomal subunit protein uL15 (146 aa).

The interval Met1–Glu51 is disordered. Over residues Arg21–Ala31 the composition is skewed to gly residues.

It belongs to the universal ribosomal protein uL15 family. In terms of assembly, part of the 50S ribosomal subunit.

In terms of biological role, binds to the 23S rRNA. In Polynucleobacter asymbioticus (strain DSM 18221 / CIP 109841 / QLW-P1DMWA-1) (Polynucleobacter necessarius subsp. asymbioticus), this protein is Large ribosomal subunit protein uL15.